The chain runs to 446 residues: tRNA modification GTPase MnmE (446 aa).

Arg-24, Glu-81, and Lys-120 together coordinate (6S)-5-formyl-5,6,7,8-tetrahydrofolate. Residues 216–368 (GLHAVLIGPP…LHIRLRELAL (153 aa)) enclose the TrmE-type G domain. Residue Asn-226 participates in K(+) binding. GTP contacts are provided by residues 226-231 (NAGKSS), 245-251 (TDVAGTT), and 270-273 (DTAG). Position 230 (Ser-230) interacts with Mg(2+). 3 residues coordinate K(+): Thr-245, Val-247, and Thr-250. Residue Thr-251 participates in Mg(2+) binding. Lys-446 lines the (6S)-5-formyl-5,6,7,8-tetrahydrofolate pocket.

Belongs to the TRAFAC class TrmE-Era-EngA-EngB-Septin-like GTPase superfamily. TrmE GTPase family. In terms of assembly, homodimer. Heterotetramer of two MnmE and two MnmG subunits. It depends on K(+) as a cofactor.

The protein localises to the cytoplasm. Exhibits a very high intrinsic GTPase hydrolysis rate. Involved in the addition of a carboxymethylaminomethyl (cmnm) group at the wobble position (U34) of certain tRNAs, forming tRNA-cmnm(5)s(2)U34. The sequence is that of tRNA modification GTPase MnmE from Xanthomonas oryzae pv. oryzae (strain MAFF 311018).